Consider the following 354-residue polypeptide: Homeobox-leucine zipper protein HOX27 (354 aa).

Residues 98–175 are disordered; sequence SVAAGAPGME…DDEGASARKK (78 aa). The segment covering 148–157 has biased composition (gly residues); that stretch reads QGGGGGGGGE. The segment at residues 171-230 is a DNA-binding region (homeobox); that stretch reads SARKKLRLSKEQSAFLEESFKEHSTLNPKQKVALAKQLNLRPRQVEVWFQNRRARTKLKQ. The interval 229–273 is leucine-zipper; sequence KQTEVDCEYLKRCCETLTEENRRLHKELAELRALKTARPFYMHLP. Residues 294 to 323 form a disordered region; the sequence is STSAPAAATSPAAAPTAAARTAVASPEPHR.

The protein belongs to the HD-ZIP homeobox family. Class II subfamily. Expressed in seedlings, roots, stems, leaf sheaths and blades and panicles.

The protein resides in the nucleus. Its function is as follows. Probable transcription factor. This Oryza sativa subsp. indica (Rice) protein is Homeobox-leucine zipper protein HOX27 (HOX27).